Consider the following 263-residue polypeptide: Hydroxyacylglutathione hydrolase (263 aa).

Zn(2+) contacts are provided by histidine 55, histidine 57, aspartate 59, histidine 60, histidine 117, aspartate 134, and histidine 172.

Belongs to the metallo-beta-lactamase superfamily. Glyoxalase II family. Monomer. The cofactor is Zn(2+).

The catalysed reaction is an S-(2-hydroxyacyl)glutathione + H2O = a 2-hydroxy carboxylate + glutathione + H(+). It functions in the pathway secondary metabolite metabolism; methylglyoxal degradation; (R)-lactate from methylglyoxal: step 2/2. Its function is as follows. Thiolesterase that catalyzes the hydrolysis of S-D-lactoyl-glutathione to form glutathione and D-lactic acid. The protein is Hydroxyacylglutathione hydrolase of Shewanella baltica (strain OS195).